We begin with the raw amino-acid sequence, 419 residues long: Histidine--tRNA ligase (419 aa).

Belongs to the class-II aminoacyl-tRNA synthetase family. In terms of assembly, homodimer.

The protein localises to the cytoplasm. It catalyses the reaction tRNA(His) + L-histidine + ATP = L-histidyl-tRNA(His) + AMP + diphosphate + H(+). This Desulforamulus reducens (strain ATCC BAA-1160 / DSM 100696 / MI-1) (Desulfotomaculum reducens) protein is Histidine--tRNA ligase.